The following is a 552-amino-acid chain: Non-structural protein NS1 (552 aa).

This sequence belongs to the orbivirus non-structural protein NS1 family.

This chain is Non-structural protein NS1 (Segment-5), found in Antilocapra americana (Pronghorn).